Reading from the N-terminus, the 642-residue chain is Serine/threonine-protein kinase pakA (642 aa).

2 stretches are compositionally biased toward polar residues: residues 1–12 (MSLKKQQQQSDF) and 38–48 (LRQSASFTALN). The disordered stretch occupies residues 1–82 (MSLKKQQQQS…GFGTKPRRKN (82 aa)). Positions 100–113 (ISAPENPVHVTHVG) constitute a CRIB domain. 2 disordered regions span residues 180–276 (GEYP…PIPE) and 317–338 (QLDR…RTRQ). 2 stretches are compositionally biased toward low complexity: residues 217–227 (SQSSPVPVLSS) and 254–266 (VVSN…RPAN). A Protein kinase domain is found at 361 to 612 (YYNLNKIGQG…AHDLLKHPFM (252 aa)). Residues 367-375 (IGQGASGGV) and Lys390 contribute to the ATP site. Asp480 serves as the catalytic Proton acceptor.

This sequence belongs to the protein kinase superfamily. STE Ser/Thr protein kinase family. STE20 subfamily.

The protein localises to the cytoplasm. Its subcellular location is the nucleus. The catalysed reaction is L-seryl-[protein] + ATP = O-phospho-L-seryl-[protein] + ADP + H(+). The enzyme catalyses L-threonyl-[protein] + ATP = O-phospho-L-threonyl-[protein] + ADP + H(+). Its function is as follows. MAP4K component of the MAPK pathway required for the mating pheromone response and the regulation of cell polarity and cell cycle. The chain is Serine/threonine-protein kinase pakA (pakA) from Talaromyces marneffei (Penicillium marneffei).